Consider the following 244-residue polypeptide: Ethylene-responsive transcription factor 1 (244 aa).

Residues 106–164 (HYRGVRQRPWGKFAAEIRDPAKNGARVWLGTYESAEEAALAYGKAAFRMRGTKALLNFP) constitute a DNA-binding region (AP2/ERF). Residues 186–198 (SASSSVSSASESG) are compositionally biased toward low complexity. Positions 186–214 (SASSSVSSASESGSPKRRRKGVAAKQAEL) are disordered.

It belongs to the ethylene-response factor family. Class 1 subfamily. Present in stems.

Its subcellular location is the nucleus. Functionally, involved in the regulation of gene expression during fruit ripening, by stress factors and by components of stress signal transduction pathways. Transcription factor that binds to the GCC-box pathogenesis-related promoter element. Probably acts as a transcriptional activator and may be involved in disease resistance pathways. This is Ethylene-responsive transcription factor 1 (ERF1) from Solanum lycopersicum (Tomato).